Here is a 1373-residue protein sequence, read N- to C-terminus: Inactive tyrosine-protein kinase PRAG1 (1373 aa).

Disordered regions lie at residues 31–50 (AGHPKARANSLPAGTRLPAR) and 197–235 (TSSCPKGPRPCTSPQPLRESLPSEDDSDQRCSPSGDSEG). The residue at position 238 (Tyr-238) is a Phosphotyrosine. Composition is skewed to basic and acidic residues over residues 250–263 (DAVHSTEGSGRRGG) and 272–284 (QGPRTRPTEEEKQ). Residues 250–338 (DAVHSTEGSG…SGASSPFAPH (89 aa)) form a disordered region. Low complexity predominate over residues 317–333 (SSSDGLSCGSSRSGASS). 2 positions are modified to phosphotyrosine: Tyr-343 and Tyr-391. Disordered stretches follow at residues 376-448 (QPAS…NPAP) and 468-794 (IYLS…LPQK). A compositionally biased stretch (polar residues) spans 419 to 438 (SQGQVWTGDTWIQKTPPSWS). The segment covering 506-522 (RESHPHNVTENTAKEKP) has biased composition (basic and acidic residues). A compositionally biased stretch (low complexity) spans 526–538 (PKLSKSSPGGSPV). 2 stretches are compositionally biased toward polar residues: residues 568–578 (NLTSSCHTNGV) and 655–670 (TSGQNSKTNSGMSKSA). Phosphoserine is present on residues Ser-671 and Ser-720. Polar residues-rich tracts occupy residues 711 to 721 (VSQSSAESLSP) and 729 to 740 (SFTTGSTDSLAS). 2 positions are modified to phosphoserine: Ser-757 and Ser-802. A disordered region spans residues 804 to 823 (PDGFFWTQGSPKPRTASPKL). Positions 911-954 (STQLQLHSLLSSISSKEGTYAKLGGLYTQSLARLVTKCEDLFMG) are required for homodimerization. The 352-residue stretch at 945-1296 (VTKCEDLFMG…EAKRVLQCLL (352 aa)) folds into the Protein kinase domain. A compositionally biased stretch (polar residues) spans 1041–1050 (LASPDTSSKD). Disordered regions lie at residues 1041–1062 (LASPDTSSKDTAPAVSPQPPAQ) and 1138–1171 (QSSPGPSATPTVPTTTSRCPSAAPAATTACQGGP). Positions 1139–1167 (SSPGPSATPTVPTTTSRCPSAAPAATTAC) are enriched in low complexity. The interval 1298–1373 (GPRRELVEQP…LQSLKLLQLL (76 aa)) is required for homodimerization.

Belongs to the protein kinase superfamily. In terms of assembly, homodimer. Dimerization leads to the catalytic activation of CSK. Interacts (via C-terminus) with RND2. Interacts with CSK (via SH2 domain) in a Tyr-391 phosphorylation-dependent manner; this interaction potentiates kinase activity of CSK. Interacts with NOTCH1 intracellular domain (N1ICD). Forms a complex with PRAG1, N1ICD and MAML1, in a MAML1-dependent manner. In terms of processing, phosphorylated by CSK on Tyr-238, Tyr-343, and Tyr-391; Tyr-391 is a primary site of phosphorylation.

It is found in the cytoplasm. Its subcellular location is the nucleus. It localises to the cell junction. The protein resides in the focal adhesion. Its function is as follows. Catalytically inactive protein kinase that acts as a scaffold protein. Functions as an effector of the small GTPase RND2, which stimulates RhoA activity and inhibits NGF-induced neurite outgrowth. Promotes Src family kinase (SFK) signaling by regulating the subcellular localization of CSK, a negative regulator of these kinases, leading to the regulation of cell morphology and motility by a CSK-dependent mechanism. Acts as a critical coactivator of Notch signaling. This chain is Inactive tyrosine-protein kinase PRAG1, found in Mus musculus (Mouse).